Reading from the N-terminus, the 225-residue chain is Orotate phosphoribosyltransferase (225 aa).

Lys-31 serves as a coordination point for 5-phospho-alpha-D-ribose 1-diphosphate. 39-40 contributes to the orotate binding site; it reads FF. 5-phospho-alpha-D-ribose 1-diphosphate is bound by residues 78-79, Arg-105, Lys-106, Lys-109, His-111, and 130-138; these read YK and DDVLTSGKA. The orotate site is built by Thr-134 and Arg-163.

It belongs to the purine/pyrimidine phosphoribosyltransferase family. PyrE subfamily. In terms of assembly, homodimer.

It carries out the reaction orotidine 5'-phosphate + diphosphate = orotate + 5-phospho-alpha-D-ribose 1-diphosphate. Its pathway is pyrimidine metabolism; UMP biosynthesis via de novo pathway; UMP from orotate: step 1/2. Its function is as follows. Catalyzes the transfer of a ribosyl phosphate group from 5-phosphoribose 1-diphosphate to orotate, leading to the formation of orotidine monophosphate (OMP). The chain is Orotate phosphoribosyltransferase (URA5) from Cryptococcus neoformans var. grubii serotype A (strain H99 / ATCC 208821 / CBS 10515 / FGSC 9487) (Filobasidiella neoformans var. grubii).